The chain runs to 356 residues: tRNA N6-adenosine threonylcarbamoyltransferase (356 aa).

Residues H115 and H119 each coordinate Fe cation. Residues 138–142, D171, G184, and N283 each bind substrate; that span reads LVSGG. D311 serves as a coordination point for Fe cation.

Belongs to the KAE1 / TsaD family. Fe(2+) is required as a cofactor.

It localises to the cytoplasm. The enzyme catalyses L-threonylcarbamoyladenylate + adenosine(37) in tRNA = N(6)-L-threonylcarbamoyladenosine(37) in tRNA + AMP + H(+). Required for the formation of a threonylcarbamoyl group on adenosine at position 37 (t(6)A37) in tRNAs that read codons beginning with adenine. Is involved in the transfer of the threonylcarbamoyl moiety of threonylcarbamoyl-AMP (TC-AMP) to the N6 group of A37, together with TsaE and TsaB. TsaD likely plays a direct catalytic role in this reaction. This Prochlorococcus marinus (strain MIT 9303) protein is tRNA N6-adenosine threonylcarbamoyltransferase.